The sequence spans 839 residues: Homeobox-leucine zipper protein HOX10 (839 aa).

Disordered stretches follow at residues 1-24 (MAAAVAMRGSSSDGGGYDKVSGMD) and 132-157 (QNTPLANDTSCESNVTTPQNPLRDAS). The homeobox DNA-binding region spans 24-87 (DSGKYVRYTP…NRRCRDKQRK (64 aa)). Residues 91 to 134 (RLQAVNRKLTAMNKLLMEENERLQKQVSQLVHENAHMRQQLQNT) adopt a coiled-coil conformation. In terms of domain architecture, START spans 155-383 (DASNPSGLLS…IAQETSGEVV (229 aa)).

Belongs to the HD-ZIP homeobox family. Class III subfamily. As to expression, expressed in stems, leaf sheaths and blades and panicles.

It is found in the nucleus. Probable transcription factor. This Oryza sativa subsp. japonica (Rice) protein is Homeobox-leucine zipper protein HOX10 (HOX10).